The chain runs to 396 residues: Ribosomal RNA large subunit methyltransferase I (396 aa).

The region spanning 2–81 is the PUA domain; that stretch reads SVRLVLAKGR…ESIDIAFFSR (80 aa).

The protein belongs to the methyltransferase superfamily. RlmI family.

It localises to the cytoplasm. The enzyme catalyses cytidine(1962) in 23S rRNA + S-adenosyl-L-methionine = 5-methylcytidine(1962) in 23S rRNA + S-adenosyl-L-homocysteine + H(+). Its function is as follows. Specifically methylates the cytosine at position 1962 (m5C1962) of 23S rRNA. This chain is Ribosomal RNA large subunit methyltransferase I, found in Escherichia coli O157:H7.